A 214-amino-acid chain; its full sequence is Ribonuclease S-2 (214 aa).

Residues 1–22 (MSKSQLTSVFFILLCALSPIYG) form the signal peptide. The cysteines at positions 38 and 43 are disulfide-linked. An N-linked (GlcNAc...) asparagine glycan is attached at N49. Residue H53 is the Proton donor of the active site. Residue H53 coordinates RNA. A glycan (N-linked (GlcNAc...) asparagine) is linked at N59. Cysteines 67 and 116 form a disulfide. Residues 91-92 (DL), K94, and F105 each bind RNA. E109 is a catalytic residue. 112–113 (KH) serves as a coordination point for RNA. The Proton acceptor role is filled by H113. Residue N160 is glycosylated (N-linked (GlcNAc...) asparagine). 2 disulfides stabilise this stretch: C175-C204 and C187-C198.

The protein belongs to the RNase T2 family.

It localises to the secreted. The protein localises to the extracellular space. It carries out the reaction a ribonucleotidyl-ribonucleotide-RNA + H2O = a 3'-end 3'-phospho-ribonucleotide-RNA + a 5'-end dephospho-ribonucleoside-RNA + H(+). Functionally, self-incompatibility (SI) is the inherited ability of a flowering plant to prevent self-fertilization by discriminating between self and non-self pollen during pollination. In many species of the Solanaceae, self-incompatibility is controlled by the single, multiallelic locus S. This stylar glycoprotein is associated with expression of self-incompatibility in potato. This is Ribonuclease S-2 (S-2) from Nicotiana alata (Winged tobacco).